The chain runs to 273 residues: Large ribosomal subunit protein uL2 (273 aa).

Positions 221–263 (RGTAMNPVDHPHGGGEGRNFGKHPVTPWGVQTKGKKTRHNKRT) are disordered. Positions 253 to 263 (KGKKTRHNKRT) are enriched in basic residues.

It belongs to the universal ribosomal protein uL2 family. In terms of assembly, part of the 50S ribosomal subunit. Forms a bridge to the 30S subunit in the 70S ribosome.

In terms of biological role, one of the primary rRNA binding proteins. Required for association of the 30S and 50S subunits to form the 70S ribosome, for tRNA binding and peptide bond formation. It has been suggested to have peptidyltransferase activity; this is somewhat controversial. Makes several contacts with the 16S rRNA in the 70S ribosome. This is Large ribosomal subunit protein uL2 from Actinobacillus succinogenes (strain ATCC 55618 / DSM 22257 / CCUG 43843 / 130Z).